The following is a 165-amino-acid chain: Ribosome maturation factor RimM (165 aa).

The region spanning 90-161 (EDEYFIVDLV…LITIRPSGEW (72 aa)) is the PRC barrel domain.

This sequence belongs to the RimM family. As to quaternary structure, binds ribosomal protein uS19.

Its subcellular location is the cytoplasm. In terms of biological role, an accessory protein needed during the final step in the assembly of 30S ribosomal subunit, possibly for assembly of the head region. Essential for efficient processing of 16S rRNA. May be needed both before and after RbfA during the maturation of 16S rRNA. It has affinity for free ribosomal 30S subunits but not for 70S ribosomes. The polypeptide is Ribosome maturation factor RimM (Clostridium perfringens (strain SM101 / Type A)).